Here is a 531-residue protein sequence, read N- to C-terminus: Inactive beta-amylase 4, chloroplastic (531 aa).

Residues 1-62 constitute a chloroplast transit peptide; the sequence is MTETGVIGCG…KRGRFITKLR (62 aa).

The protein belongs to the glycosyl hydrolase 14 family. In terms of tissue distribution, preferentially expressed in vascular tissue of cotyledons, leaves, petioles, stems, petals, siliques and roots, particularly in phloem. Also present in root tip.

The protein localises to the plastid. The protein resides in the chloroplast. In terms of biological role, no alpha-1,4-glucan hydrolase activity, including beta-amylase, alpha-amylase, a-glucosidase or alpha-amyloglucosidase. However, facilitates or regulates starch breakdown, especially at night, by a mechanism involving direct interaction with starch or other alpha-1,4-glucan. This is Inactive beta-amylase 4, chloroplastic (BAM4) from Arabidopsis thaliana (Mouse-ear cress).